A 522-amino-acid polypeptide reads, in one-letter code: FAD-dependent monooxygenase fsr3 (522 aa).

A disordered region spans residues 1–27 (MKNTQTNGTHPIIDKKPNGTLNGDHQE). Arg-164 lines the FAD pocket. Arg-245 is a catalytic residue. Asp-369 and Ala-382 together coordinate FAD.

It belongs to the paxM FAD-dependent monooxygenase family. FAD serves as cofactor.

The protein operates within polyketide biosynthesis. Functionally, FAD-dependent monooxygenase; part of the gene cluster that mediates the biosynthesis of fusarubins, highly pigmented naphthoquinones responsible for the coloration of the fruiting bodies. The non-reducing polyketide synthase FSR1 is responsible for the condensation of seven acetyl-CoA units to yield a haptaketide. After rings A and B are formed by aldol-type cyclization, the PKS-derived product is released as 6-O-demethylfusarubinaldehyde. Then, two hydroxyl groups at C-5 and C-10 are incorporated by FSR3, and simultaneously hydroxyl groups at C-6 and C-8 are methylated by FSR2. The aldehyde is, on the one hand, reduced by FSR3 to 8-O-methylfusarubin alcohol, which equilibrates mainly with 8-O-methylfusarubin and only small amounts of 8-O-methylnectriafurone. On the other hand, the aldehyde can be oxidized to form 8-O-methylfusarubinic acid, a reaction driven by FSR3 equilibrating with 8-O-methylfusarubinlactone, finally resulting in 8-O-methylanhydrofusarubinlactol after a further reduction step and loss of water. 8-O-Methylfusarubinic acid can also undergo decarboxylation, resulting in 8-O-methyl-13-hydroxynorjavanicin after another hydroxylation step at C-13. Both steps are most likely also accomplished by FSR3. No enzymatic function has been determined so far for either FSR4 and FSR5. Their deletion does not alter the product spectrum, but the possibility that they catalyze specific enzymatic steps during perithecium development cannot be ruled out. FSR4 might possess a regulatory function in the biosynthesis of fusarubins. The polypeptide is FAD-dependent monooxygenase fsr3 (Gibberella fujikuroi (strain CBS 195.34 / IMI 58289 / NRRL A-6831) (Bakanae and foot rot disease fungus)).